The primary structure comprises 585 residues: Pyruvate kinase (585 aa).

Residue R32 participates in substrate binding. Residues N34, S36, D66, and T67 each contribute to the K(+) site. 34–37 provides a ligand contact to ATP; sequence NFSH. Residues R73 and K156 each coordinate ATP. E221 lines the Mg(2+) pocket. Substrate contacts are provided by G244, D245, and T277. Residue D245 participates in Mg(2+) binding.

Belongs to the pyruvate kinase family. The protein in the C-terminal section; belongs to the PEP-utilizing enzyme family. Requires Mg(2+) as cofactor. K(+) serves as cofactor.

It carries out the reaction pyruvate + ATP = phosphoenolpyruvate + ADP + H(+). It functions in the pathway carbohydrate degradation; glycolysis; pyruvate from D-glyceraldehyde 3-phosphate: step 5/5. The protein is Pyruvate kinase (pyk) of Staphylococcus aureus (strain USA300).